The sequence spans 286 residues: Bifunctional protein FolD (286 aa).

NADP(+) is bound by residues 165–167 (GRS), Ser190, and Ile231.

It belongs to the tetrahydrofolate dehydrogenase/cyclohydrolase family. Homodimer.

The enzyme catalyses (6R)-5,10-methylene-5,6,7,8-tetrahydrofolate + NADP(+) = (6R)-5,10-methenyltetrahydrofolate + NADPH. It catalyses the reaction (6R)-5,10-methenyltetrahydrofolate + H2O = (6R)-10-formyltetrahydrofolate + H(+). Its pathway is one-carbon metabolism; tetrahydrofolate interconversion. Its function is as follows. Catalyzes the oxidation of 5,10-methylenetetrahydrofolate to 5,10-methenyltetrahydrofolate and then the hydrolysis of 5,10-methenyltetrahydrofolate to 10-formyltetrahydrofolate. The chain is Bifunctional protein FolD from Thermodesulfovibrio yellowstonii (strain ATCC 51303 / DSM 11347 / YP87).